Here is a 304-residue protein sequence, read N- to C-terminus: uncharacterized protein (304 aa).

Coiled-coil stretches lie at residues 3–35 (KNQYISQNMENKEIENKEIENKKTDSKEFDKEI) and 89–132 (KSNK…NSNL). Positions 96-121 (LQNKQQENSEEKNSEEKNSEEKNSEE) are disordered.

This is an uncharacterized protein from Acanthamoeba polyphaga (Amoeba).